Consider the following 209-residue polypeptide: Large ribosomal subunit protein uL3 (209 aa).

Residues 118-151 form a disordered region; it reads GFQGAIKRHGQSRGPMSHGSRYHRRPGSMGPVAP.

This sequence belongs to the universal ribosomal protein uL3 family. In terms of assembly, part of the 50S ribosomal subunit. Forms a cluster with proteins L14 and L19.

In terms of biological role, one of the primary rRNA binding proteins, it binds directly near the 3'-end of the 23S rRNA, where it nucleates assembly of the 50S subunit. The protein is Large ribosomal subunit protein uL3 of Enterococcus faecalis (strain ATCC 700802 / V583).